The primary structure comprises 119 residues: Basic phospholipase A2 (119 aa).

Intrachain disulfides connect C11–C72, C27–C118, C29–C45, C44–C100, C51–C93, C61–C86, and C79–C91. Ca(2+) is bound by residues Y28, G30, and G32. Residue H48 is part of the active site. Ca(2+) is bound at residue D49. N-linked (GlcNAc...) asparagine glycosylation occurs at N82. Residue D94 is part of the active site.

Belongs to the phospholipase A2 family. Group I subfamily. D49 sub-subfamily. It depends on Ca(2+) as a cofactor. In terms of tissue distribution, expressed by the venom gland.

It localises to the secreted. The enzyme catalyses a 1,2-diacyl-sn-glycero-3-phosphocholine + H2O = a 1-acyl-sn-glycero-3-phosphocholine + a fatty acid + H(+). In terms of biological role, snake venom phospholipase A2 (PLA2) that shows weak myotoxicity and induces edema in mice. Shows no cytotoxicity in vitro. Has an anticoagulant effect in vitro. PLA2 catalyzes the calcium-dependent hydrolysis of the 2-acyl groups in 3-sn-phosphoglycerides. This chain is Basic phospholipase A2, found in Micrurus mipartitus (Red-tailed coral snake).